The chain runs to 533 residues: Conglutin beta 2 (533 aa).

The N-terminal stretch at M1–G30 is a signal peptide. A propeptide spanning residues E31–S108 is cleaved from the precursor. Basic and acidic residues-rich tracts occupy residues S37 to P51 and S79 to E99. 2 disordered regions span residues S37–Q123 and K315–N337. 2 consecutive Cupin type-1 domains span residues Y115–Q273 and F332–E494. N-linked (GlcNAc...) asparagine glycosylation is found at N363 and N444. The disordered stretch occupies residues S503–F533.

Belongs to the 7S seed storage protein family. As to quaternary structure, multimers. Give rise to a complex array of processed forms, due to a large number of processing sites and changes in glycosylation.

In terms of biological role, seed storage protein. Accumulates during seed development and is hydrolyzed after germination to provide a carbon and nitrogen source for the developing seedling. Functionally, has a lectin-like activity. In Lupinus albus (White lupine), this protein is Conglutin beta 2.